The primary structure comprises 264 residues: Merozoite surface protein 2 (264 aa).

The N-terminal stretch at 1–20 (MKVIKTLSIINFFIFVTFNI) is a signal peptide. Asn-22 and Asn-36 each carry an N-linked (GlcNAc...) asparagine glycan. The interval 44–190 (ANEGSNTNSV…PQTAENENPA (147 aa)) is polymorphic region. Residues 46 to 227 (EGSNTNSVGA…QKECTDGNKE (182 aa)) form a disordered region. A run of 2 repeats spans residues 60 to 91 (ADTI…TPTA) and 92 to 123 (ADTI…TPTA). The 2 X 32 AA perfects repeats stretch occupies residues 60 to 123 (ADTIASGSQR…GESQTTTPTA (64 aa)). Positions 70 to 81 (STNSASTSTTNN) are enriched in low complexity. Residues 82–101 (GESQTTTPTAADTIASGSQR) show a composition bias toward polar residues. Residues 102 to 145 (STNSASTSTTNNGESQTTTPTAADTPTATESISPSPPITTTESS) show a composition bias toward low complexity. The segment covering 154–166 (TDGKGEESEKQNE) has biased composition (basic and acidic residues). An N-linked (GlcNAc...) asparagine glycan is attached at Asn-213. The segment covering 217-226 (SQKECTDGNK) has biased composition (basic and acidic residues). Cys-221 and Cys-229 are joined by a disulfide. N-linked (GlcNAc...) asparagine glycosylation is present at Asn-238. Asn-238 is lipidated: GPI-anchor amidated asparagine. Positions 239–264 (SSNIASINKFVVLISATLVLSFAIFI) are cleaved as a propeptide — removed in mature form.

Its subcellular location is the cell membrane. In terms of biological role, may play a role in the merozoite attachment to the erythrocyte. In Plasmodium falciparum (isolate FC27 / Papua New Guinea), this protein is Merozoite surface protein 2.